The sequence spans 818 residues: Probable beta-glucosidase I (818 aa).

N176 carries N-linked (GlcNAc...) asparagine glycosylation. D204 is a catalytic residue. Positions 374–534 (DGKPGFTFRV…SQEELISNAV (161 aa)) constitute a PA14 domain. N-linked (GlcNAc...) asparagine glycans are attached at residues N453 and N472.

It belongs to the glycosyl hydrolase 3 family.

It localises to the secreted. It carries out the reaction Hydrolysis of terminal, non-reducing beta-D-glucosyl residues with release of beta-D-glucose.. It functions in the pathway glycan metabolism; cellulose degradation. Functionally, beta-glucosidases are one of a number of cellulolytic enzymes involved in the degradation of cellulosic biomass. Catalyzes the last step releasing glucose from the inhibitory cellobiose. The protein is Probable beta-glucosidase I (bglI) of Aspergillus niger (strain ATCC MYA-4892 / CBS 513.88 / FGSC A1513).